A 364-amino-acid chain; its full sequence is Chorismate synthase (364 aa).

NADP(+) is bound by residues arginine 48 and arginine 54. FMN is bound by residues 125–127 (RSS), 238–239 (NA), glycine 278, 293–297 (KPTSS), and arginine 319.

The protein belongs to the chorismate synthase family. As to quaternary structure, homotetramer. It depends on FMNH2 as a cofactor.

It carries out the reaction 5-O-(1-carboxyvinyl)-3-phosphoshikimate = chorismate + phosphate. Its pathway is metabolic intermediate biosynthesis; chorismate biosynthesis; chorismate from D-erythrose 4-phosphate and phosphoenolpyruvate: step 7/7. Functionally, catalyzes the anti-1,4-elimination of the C-3 phosphate and the C-6 proR hydrogen from 5-enolpyruvylshikimate-3-phosphate (EPSP) to yield chorismate, which is the branch point compound that serves as the starting substrate for the three terminal pathways of aromatic amino acid biosynthesis. This reaction introduces a second double bond into the aromatic ring system. The protein is Chorismate synthase of Marinobacter nauticus (strain ATCC 700491 / DSM 11845 / VT8) (Marinobacter aquaeolei).